Here is an 89-residue protein sequence, read N- to C-terminus: Small ribosomal subunit protein uS14 (89 aa).

Belongs to the universal ribosomal protein uS14 family. Part of the 30S ribosomal subunit. Contacts proteins S3 and S10.

Binds 16S rRNA, required for the assembly of 30S particles and may also be responsible for determining the conformation of the 16S rRNA at the A site. The protein is Small ribosomal subunit protein uS14 of Chlorobium chlorochromatii (strain CaD3).